The sequence spans 295 residues: Nucleotide-binding protein Lxx11490 (295 aa).

An ATP-binding site is contributed by 19–26 (GMSGAGRS). 70–73 (DVRG) contacts GTP.

It belongs to the RapZ-like family.

Its function is as follows. Displays ATPase and GTPase activities. The chain is Nucleotide-binding protein Lxx11490 from Leifsonia xyli subsp. xyli (strain CTCB07).